The following is a 119-amino-acid chain: Cysteine-rich DPF motif domain-containing protein 1 (119 aa).

The protein belongs to the CDPF1 family.

In Mus musculus (Mouse), this protein is Cysteine-rich DPF motif domain-containing protein 1 (Cdpf1).